The primary structure comprises 86 residues: Toxin Td2 (86 aa).

The first 20 residues, 1–20, serve as a signal peptide directing secretion; the sequence is MTRFVLFLNCFFLICMVVEC. The LCN-type CS-alpha/beta domain maps to 21-83; it reads KEGYLMGADG…TWDRATNTCG (63 aa). 4 disulfides stabilise this stretch: C31-C82, C35-C57, C43-C63, and C47-C65. Arginine amide is present on R84.

As to expression, expressed by the venom gland.

The protein localises to the secreted. In terms of biological role, beta toxins bind voltage-independently at site-4 of sodium channels (Nav) and shift the voltage of activation toward more negative potentials thereby affecting sodium channel activation and promoting spontaneous and repetitive firing. In Tityus discrepans (Venezuelan scorpion), this protein is Toxin Td2.